Consider the following 69-residue polypeptide: Sec-independent protein translocase protein TatA (69 aa).

A helical membrane pass occupies residues 1 to 21 (MFGLGGQELVLILLIVLLLFG). Residues 47–63 (EEEFNKSMDDNPKKEKA) show a composition bias toward basic and acidic residues. Residues 47 to 69 (EEEFNKSMDDNPKKEKATTASKS) are disordered.

The protein belongs to the TatA/E family. Forms a complex with TatC.

The protein resides in the cell inner membrane. Part of the twin-arginine translocation (Tat) system that transports large folded proteins containing a characteristic twin-arginine motif in their signal peptide across membranes. TatA could form the protein-conducting channel of the Tat system. This is Sec-independent protein translocase protein TatA from Chlorobium chlorochromatii (strain CaD3).